The chain runs to 144 residues: Giant hemoglobin AIII chain (144 aa).

One can recognise a Globin domain in the interval Glu2–Asn144. Position 95 (His95) interacts with heme b.

Belongs to the globin family. In terms of assembly, giant hemoglobin is composed of four heme-containing chains (AI to AIV), and two linker chains (AV and AVI).

The sequence is that of Giant hemoglobin AIII chain from Lamellibrachia sp. (Deep-sea giant tube worm).